Here is a 453-residue protein sequence, read N- to C-terminus: Tubulin gamma chain (453 aa).

142-148 (AGGTGSG) is a GTP binding site.

It belongs to the tubulin family.

It localises to the cytoplasm. It is found in the cytoskeleton. Its subcellular location is the microtubule organizing center. The protein resides in the spindle pole body. Functionally, tubulin is the major constituent of microtubules. The gamma chain is found at microtubule organizing centers (MTOC) such as the spindle poles or the centrosome, suggesting that it is involved in the minus-end nucleation of microtubule assembly. This chain is Tubulin gamma chain (TUB4), found in Coprinopsis cinerea (strain Okayama-7 / 130 / ATCC MYA-4618 / FGSC 9003) (Inky cap fungus).